The chain runs to 79 residues: MFVELVYDKRNVEGLPGAREIILNELTKRVHQLFPDAQVKVKPMQANALNSDCTKTEKERLHRMLEEMFEEADMWLVAE.

The protein belongs to the DinI family.

In terms of biological role, affects survival in macrophages. The sequence is that of Virulence protein MsgA (msgA) from Salmonella typhi.